The primary structure comprises 1055 residues: Bifunctional fucokinase/GDP-fucose pyrophosphorylase (1055 aa).

A GDP-fucose pyrophosphorylase region spans residues 34-565 (WDAIVLTAAS…SSQRVSLEEL (532 aa)). Positions 693 to 1055 (GKSHSENHIS…VKVYNWSICI (363 aa)) are L-fucokinase. 826-836 (PRGSGLGTSSI) contributes to the ATP binding site.

The protein belongs to the GHMP kinase family. Mn(2+) serves as cofactor. Mg(2+) is required as a cofactor. As to expression, ubiquitous. Highest expression in flower buds.

The catalysed reaction is L-fucose + ATP = beta-L-fucose 1-phosphate + ADP + H(+). It carries out the reaction beta-L-fucose 1-phosphate + GTP + H(+) = GDP-beta-L-fucose + diphosphate. Bifunctional enzyme involved in the salvage pathway which converts free L-fucose to GDP-L-fucose. Catalyzes two successive reactions, the ATP-dependent phosphorylation of L-fucose to L-fucose 1-phosphate, and its guanylylation to GDP-L-fucose. The sugar-1-kinase activity has a strict substrate specificity for L-fucose and ATP. The pyrophosphorylase activity has a strict substrate specificity for L-fucose 1-phosphate and GTP. This chain is Bifunctional fucokinase/GDP-fucose pyrophosphorylase (FKGP), found in Arabidopsis thaliana (Mouse-ear cress).